A 118-amino-acid polypeptide reads, in one-letter code: Small ribosomal subunit protein uS13 (118 aa).

Residues 94-118 (SLPLRGQRTKTNARTRKGPRKPIKK) are disordered.

The protein belongs to the universal ribosomal protein uS13 family. Part of the 30S ribosomal subunit. Forms a loose heterodimer with protein S19. Forms two bridges to the 50S subunit in the 70S ribosome.

Its function is as follows. Located at the top of the head of the 30S subunit, it contacts several helices of the 16S rRNA. In the 70S ribosome it contacts the 23S rRNA (bridge B1a) and protein L5 of the 50S subunit (bridge B1b), connecting the 2 subunits; these bridges are implicated in subunit movement. Contacts the tRNAs in the A and P-sites. This Shewanella oneidensis (strain ATCC 700550 / JCM 31522 / CIP 106686 / LMG 19005 / NCIMB 14063 / MR-1) protein is Small ribosomal subunit protein uS13.